A 410-amino-acid chain; its full sequence is Histidine--tRNA ligase (410 aa).

It belongs to the class-II aminoacyl-tRNA synthetase family. Homodimer.

It is found in the cytoplasm. It catalyses the reaction tRNA(His) + L-histidine + ATP = L-histidyl-tRNA(His) + AMP + diphosphate + H(+). This chain is Histidine--tRNA ligase, found in Elusimicrobium minutum (strain Pei191).